A 272-amino-acid chain; its full sequence is Granaticin polyketide synthase putative ketoacyl reductase 1 (272 aa).

Position 21 to 45 (21 to 45) interacts with NAD(+); it reads LVTGATSGIGLAIARRLAALGARTF. Ser155 is a substrate binding site. Catalysis depends on Tyr168, which acts as the Proton acceptor.

Belongs to the short-chain dehydrogenases/reductases (SDR) family.

It participates in antibiotic biosynthesis; granaticin biosynthesis. The protein is Granaticin polyketide synthase putative ketoacyl reductase 1 (gra-orf5) of Streptomyces violaceoruber.